The following is a 532-amino-acid chain: uncharacterized protein (532 aa).

A run of 6 helical transmembrane segments spans residues His-7–Ile-26, Gly-30–Ile-52, Phe-59–Phe-77, Leu-87–Phe-109, Val-116–Ile-134, and Ser-139–Val-161. RCK C-terminal domains are found at residues Leu-179 to Glu-262 and Arg-263 to Asn-346. 4 helical membrane-spanning segments follow: residues Phe-356–Gly-378, Gly-388–Met-410, Gly-446–Gly-468, and Tyr-509–Val-531.

This sequence belongs to the AAE transporter (TC 2.A.81) family.

It localises to the cell membrane. This is an uncharacterized protein from Bacteroides fragilis (strain YCH46).